We begin with the raw amino-acid sequence, 330 residues long: Aspartate--ammonia ligase (330 aa).

Belongs to the class-II aminoacyl-tRNA synthetase family. AsnA subfamily.

Its subcellular location is the cytoplasm. It carries out the reaction L-aspartate + NH4(+) + ATP = L-asparagine + AMP + diphosphate + H(+). Its pathway is amino-acid biosynthesis; L-asparagine biosynthesis; L-asparagine from L-aspartate (ammonia route): step 1/1. The sequence is that of Aspartate--ammonia ligase from Streptococcus agalactiae serotype III (strain NEM316).